A 206-amino-acid polypeptide reads, in one-letter code: Putative transporter protein AmiS2 (206 aa).

Transmembrane regions (helical) follow at residues valine 4–valine 24, alanine 29–isoleucine 49, serine 56–isoleucine 76, glycine 86–phenylalanine 106, valine 113–glycine 133, phenylalanine 142–isoleucine 162, and valine 173–alanine 193.

This sequence belongs to the AmiS/UreI family.

The protein resides in the cell membrane. In terms of biological role, possible transporter that might be responsible for the adsorption of amidase substrates or release of their hydrolysis products. The chain is Putative transporter protein AmiS2 (amiS2) from Rhodococcus erythropolis (Arthrobacter picolinophilus).